A 424-amino-acid polypeptide reads, in one-letter code: Putative fasciclin-like arabinogalactan protein 20 (424 aa).

Residues 46-66 (LLTTFFLIFFVLDIDLVATSM) form a helical membrane-spanning segment. The region spanning 56–194 (VLDIDLVATS…YVVIYGSDEF (139 aa)) is the FAS1 1 domain. Asn-153 and Asn-160 each carry an N-linked (GlcNAc...) asparagine glycan. Residues 199–226 (TKISDDSSSSSSIPSTTSSTGSIPIPSS) are compositionally biased toward low complexity. The interval 199–246 (TKISDDSSSSSSIPSTTSSTGSIPIPSSATQTPPSPNIASDSTRNLPN) is disordered. Polar residues predominate over residues 227 to 246 (ATQTPPSPNIASDSTRNLPN). Residues Asn-246, Asn-283, and Asn-287 are each glycosylated (N-linked (GlcNAc...) asparagine). The FAS1 2 domain maps to 250–384 (PVNRFNIFES…IAVHGFNQMI (135 aa)). Residues 405-424 (QEEEGVHGEYSSELGDYGLH) form a disordered region.

The protein belongs to the fasciclin-like AGP family.

The protein resides in the membrane. May be a cell surface adhesion protein. The protein is Putative fasciclin-like arabinogalactan protein 20 (FLA20) of Arabidopsis thaliana (Mouse-ear cress).